The primary structure comprises 310 residues: Cytochrome f (310 aa).

The first 26 residues, 1 to 26 (MNIKLTLLVLISIINLMIIQPIQTLA), serve as a signal peptide directing secretion. Phe27, Cys47, Cys50, and His51 together coordinate heme. Residues 276 to 296 (IKGMIVFFFTVTIAQIFFVLK) traverse the membrane as a helical segment.

This sequence belongs to the cytochrome f family. The 4 large subunits of the cytochrome b6-f complex are cytochrome b6, subunit IV (17 kDa polypeptide, petD), cytochrome f and the Rieske protein, while the 4 small subunits are PetG, PetL, PetM and PetN. The complex functions as a dimer. It depends on heme as a cofactor.

It is found in the plastid. Its subcellular location is the chloroplast thylakoid membrane. Its function is as follows. Component of the cytochrome b6-f complex, which mediates electron transfer between photosystem II (PSII) and photosystem I (PSI), cyclic electron flow around PSI, and state transitions. This Gracilaria tenuistipitata var. liui (Red alga) protein is Cytochrome f.